A 233-amino-acid polypeptide reads, in one-letter code: Orotidine 5'-phosphate decarboxylase (233 aa).

Substrate-binding positions include aspartate 13, lysine 35, 62-71 (DLKFHDIPNT), threonine 122, arginine 182, glutamine 191, glycine 211, and arginine 212. Lysine 64 serves as the catalytic Proton donor.

This sequence belongs to the OMP decarboxylase family. Type 1 subfamily. Homodimer.

The catalysed reaction is orotidine 5'-phosphate + H(+) = UMP + CO2. It functions in the pathway pyrimidine metabolism; UMP biosynthesis via de novo pathway; UMP from orotate: step 2/2. Its function is as follows. Catalyzes the decarboxylation of orotidine 5'-monophosphate (OMP) to uridine 5'-monophosphate (UMP). The chain is Orotidine 5'-phosphate decarboxylase from Pseudomonas entomophila (strain L48).